The primary structure comprises 135 residues: Class I hydrophobin 15 (135 aa).

The first 21 residues, 1–21, serve as a signal peptide directing secretion; it reads MFAKSATIAIVLAALAGFSAA. 4 disulfide bridges follow: C50/C113, C57/C107, C58/C97, and C114/C127. N-linked (GlcNAc...) asparagine glycosylation is present at N131.

Belongs to the fungal hydrophobin family. In terms of assembly, self-assembles to form functional amyloid fibrils called rodlets. Self-assembly into fibrillar rodlets occurs spontaneously at hydrophobic:hydrophilic interfaces and the rodlets further associate laterally to form amphipathic monolayers.

It is found in the secreted. The protein resides in the cell wall. In terms of biological role, aerial growth, conidiation, and dispersal of filamentous fungi in the environment rely upon a capability of their secreting small amphipathic proteins called hydrophobins (HPBs) with low sequence identity. Class I can self-assemble into an outermost layer of rodlet bundles on aerial cell surfaces, conferring cellular hydrophobicity that supports fungal growth, development and dispersal; whereas Class II form highly ordered films at water-air interfaces through intermolecular interactions but contribute nothing to the rodlet structure. The sequence is that of Class I hydrophobin 15 from Pleurotus ostreatus (strain PC15) (Oyster mushroom).